Reading from the N-terminus, the 667-residue chain is Sterile alpha motif domain-containing protein 15 (667 aa).

Residues 1 to 18 (MAEVPEDYDSGPDEDGEP) are compositionally biased toward acidic residues. Disordered regions lie at residues 1–108 (MAEV…KSER) and 147–424 (SAME…IKSK). Basic and acidic residues-rich tracts occupy residues 19–53 (ESER…HEPQ), 84–93 (IAKESKRDVP), 187–196 (ESLRVQHEET), and 228–266 (TKPD…KSSE). Acidic residues predominate over residues 268–277 (AGLEPPEETQ). 4 stretches are compositionally biased toward basic and acidic residues: residues 284–314 (MQRK…KSTD), 322–338 (EEIK…KPNE), 346–364 (EMMK…EEKN), and 381–422 (PRVE…EPIK). The SAM domain maps to 538 to 601 (WDPEKVAEWI…SRHTRELLEI (64 aa)).

The protein is Sterile alpha motif domain-containing protein 15 (SAMD15) of Macaca fascicularis (Crab-eating macaque).